We begin with the raw amino-acid sequence, 37 residues long: Cytochrome b6-f complex subunit 5 (37 aa).

A helical membrane pass occupies residues 5 to 25; it reads LLCGIVLGLIPITLAGLFMAA.

This sequence belongs to the PetG family. In terms of assembly, the 4 large subunits of the cytochrome b6-f complex are cytochrome b6, subunit IV (17 kDa polypeptide, PetD), cytochrome f and the Rieske protein, while the 4 small subunits are PetG, PetL, PetM and PetN. The complex functions as a dimer.

It localises to the cellular thylakoid membrane. Functionally, component of the cytochrome b6-f complex, which mediates electron transfer between photosystem II (PSII) and photosystem I (PSI), cyclic electron flow around PSI, and state transitions. PetG is required for either the stability or assembly of the cytochrome b6-f complex. In Synechococcus elongatus (strain ATCC 33912 / PCC 7942 / FACHB-805) (Anacystis nidulans R2), this protein is Cytochrome b6-f complex subunit 5.